Consider the following 484-residue polypeptide: UDP-N-acetylmuramate--L-alanine ligase (484 aa).

123-129 (GTHGKTT) is an ATP binding site.

The protein belongs to the MurCDEF family.

The protein resides in the cytoplasm. The enzyme catalyses UDP-N-acetyl-alpha-D-muramate + L-alanine + ATP = UDP-N-acetyl-alpha-D-muramoyl-L-alanine + ADP + phosphate + H(+). The protein operates within cell wall biogenesis; peptidoglycan biosynthesis. Cell wall formation. The chain is UDP-N-acetylmuramate--L-alanine ligase from Pseudomonas fluorescens (strain ATCC BAA-477 / NRRL B-23932 / Pf-5).